A 430-amino-acid chain; its full sequence is Serine--tRNA ligase (430 aa).

237 to 239 (TAE) contributes to the L-serine binding site. Residue 268–270 (RRE) participates in ATP binding. Position 291 (Glu291) interacts with L-serine. 355–358 (EISS) is a binding site for ATP. Ser391 serves as a coordination point for L-serine.

Belongs to the class-II aminoacyl-tRNA synthetase family. Type-1 seryl-tRNA synthetase subfamily. As to quaternary structure, homodimer. The tRNA molecule binds across the dimer.

It is found in the cytoplasm. The enzyme catalyses tRNA(Ser) + L-serine + ATP = L-seryl-tRNA(Ser) + AMP + diphosphate + H(+). It catalyses the reaction tRNA(Sec) + L-serine + ATP = L-seryl-tRNA(Sec) + AMP + diphosphate + H(+). Its pathway is aminoacyl-tRNA biosynthesis; selenocysteinyl-tRNA(Sec) biosynthesis; L-seryl-tRNA(Sec) from L-serine and tRNA(Sec): step 1/1. Catalyzes the attachment of serine to tRNA(Ser). Is also able to aminoacylate tRNA(Sec) with serine, to form the misacylated tRNA L-seryl-tRNA(Sec), which will be further converted into selenocysteinyl-tRNA(Sec). In Magnetococcus marinus (strain ATCC BAA-1437 / JCM 17883 / MC-1), this protein is Serine--tRNA ligase.